The following is a 608-amino-acid chain: Glutamine--fructose-6-phosphate aminotransferase [isomerizing] (608 aa).

The active-site Nucleophile; for GATase activity is Cys2. The region spanning Cys2–Thr217 is the Glutamine amidotransferase type-2 domain. 2 SIS domains span residues Thr283–Thr422 and Leu456–Pro598. Lys603 serves as the catalytic For Fru-6P isomerization activity.

The protein localises to the cytoplasm. It carries out the reaction D-fructose 6-phosphate + L-glutamine = D-glucosamine 6-phosphate + L-glutamate. Its function is as follows. Involved in the production of the root hair deformation (HAD) factor specifically on medicago. The polypeptide is Glutamine--fructose-6-phosphate aminotransferase [isomerizing] (nodM) (Rhizobium leguminosarum bv. viciae).